The chain runs to 444 residues: Phosphoglucosamine mutase (444 aa).

S100 serves as the catalytic Phosphoserine intermediate. Positions 100, 240, 242, and 244 each coordinate Mg(2+). S100 carries the phosphoserine modification.

It belongs to the phosphohexose mutase family. Mg(2+) serves as cofactor. Post-translationally, activated by phosphorylation.

The enzyme catalyses alpha-D-glucosamine 1-phosphate = D-glucosamine 6-phosphate. Functionally, catalyzes the conversion of glucosamine-6-phosphate to glucosamine-1-phosphate. The sequence is that of Phosphoglucosamine mutase from Desulforamulus reducens (strain ATCC BAA-1160 / DSM 100696 / MI-1) (Desulfotomaculum reducens).